We begin with the raw amino-acid sequence, 363 residues long: Small ribosomal subunit biogenesis GTPase RsgA (363 aa).

Positions 112–268 constitute a CP-type G domain; the sequence is HQQVIAANID…LIDTPGMREL (157 aa). GTP contacts are provided by residues 157–160 and 210–218; these read TKAD and GSSGAGKST. The Zn(2+) site is built by Cys291, Cys296, His298, and Cys304. Positions 340 to 363 are disordered; that stretch reads RVAQNNRGKGSGKRPASVDRPGRR.

The protein belongs to the TRAFAC class YlqF/YawG GTPase family. RsgA subfamily. As to quaternary structure, monomer. Associates with 30S ribosomal subunit, binds 16S rRNA. It depends on Zn(2+) as a cofactor.

It is found in the cytoplasm. Its function is as follows. One of several proteins that assist in the late maturation steps of the functional core of the 30S ribosomal subunit. Helps release RbfA from mature subunits. May play a role in the assembly of ribosomal proteins into the subunit. Circularly permuted GTPase that catalyzes slow GTP hydrolysis, GTPase activity is stimulated by the 30S ribosomal subunit. The chain is Small ribosomal subunit biogenesis GTPase RsgA from Xanthomonas euvesicatoria pv. vesicatoria (strain 85-10) (Xanthomonas campestris pv. vesicatoria).